Consider the following 226-residue polypeptide: Urease accessory protein UreF (226 aa).

This sequence belongs to the UreF family. In terms of assembly, ureD, UreF and UreG form a complex that acts as a GTP-hydrolysis-dependent molecular chaperone, activating the urease apoprotein by helping to assemble the nickel containing metallocenter of UreC. The UreE protein probably delivers the nickel.

The protein resides in the cytoplasm. Its function is as follows. Required for maturation of urease via the functional incorporation of the urease nickel metallocenter. The polypeptide is Urease accessory protein UreF (Burkholderia mallei (strain NCTC 10247)).